A 340-amino-acid polypeptide reads, in one-letter code: rRNA adenine N-6-methyltransferase (340 aa).

The segment covering 1-25 (MAGPQDRPRGRGPSSGRPQRPVGGR) has biased composition (low complexity). The interval 1–37 (MAGPQDRPRGRGPSSGRPQRPVGGRSQRDRDRRVLGQ) is disordered. 6 residues coordinate S-adenosyl-L-methionine: N38, L40, G65, E86, D111, and A127. Residues 284–340 (RGGAARGPGDQRGRRGRPGGGPRPDGRAGGGPRRDAGGRRTGDGRGGRPRPPRGGQA) form a disordered region. The segment covering 301-314 (PGGGPRPDGRAGGG) has biased composition (gly residues). The segment covering 315 to 329 (PRRDAGGRRTGDGRG) has biased composition (basic and acidic residues).

Belongs to the class I-like SAM-binding methyltransferase superfamily. rRNA adenine N(6)-methyltransferase family.

Involved in erythromycin resistance. This Aeromicrobium erythreum (strain ATCC 51598 / DSM 8599 / JCM 8359 / NBRC 15406 / NRRL B-3381) protein is rRNA adenine N-6-methyltransferase (ermA).